The chain runs to 269 residues: Cytochrome c oxidase subunit 3 (269 aa).

The next 7 membrane-spanning stretches (helical) occupy residues 13–33 (PFHL…LLVL), 46–66 (NGHY…SFWF), 90–110 (GVIL…WAFF), 138–160 (PLLN…HSII), 167–187 (ALYG…FQGV), 207–227 (FGTG…LVAL), and 245–265 (AGIL…ISIY).

Belongs to the cytochrome c oxidase subunit 3 family. As to quaternary structure, component of the cytochrome c oxidase (complex IV, CIV), a multisubunit enzyme composed of a catalytic core of 3 subunits and several supernumerary subunits. The complex exists as a monomer or a dimer and forms supercomplexes (SCs) in the inner mitochondrial membrane with ubiquinol-cytochrome c oxidoreductase (cytochrome b-c1 complex, complex III, CIII).

The protein resides in the mitochondrion inner membrane. It catalyses the reaction 4 Fe(II)-[cytochrome c] + O2 + 8 H(+)(in) = 4 Fe(III)-[cytochrome c] + 2 H2O + 4 H(+)(out). In terms of biological role, component of the cytochrome c oxidase, the last enzyme in the mitochondrial electron transport chain which drives oxidative phosphorylation. The respiratory chain contains 3 multisubunit complexes succinate dehydrogenase (complex II, CII), ubiquinol-cytochrome c oxidoreductase (cytochrome b-c1 complex, complex III, CIII) and cytochrome c oxidase (complex IV, CIV), that cooperate to transfer electrons derived from NADH and succinate to molecular oxygen, creating an electrochemical gradient over the inner membrane that drives transmembrane transport and the ATP synthase. Cytochrome c oxidase is the component of the respiratory chain that catalyzes the reduction of oxygen to water. Electrons originating from reduced cytochrome c in the intermembrane space (IMS) are transferred via the dinuclear copper A center (CU(A)) of subunit 2 and heme A of subunit 1 to the active site in subunit 1, a binuclear center (BNC) formed by heme A3 and copper B (CU(B)). The BNC reduces molecular oxygen to 2 water molecules using 4 electrons from cytochrome c in the IMS and 4 protons from the mitochondrial matrix. The sequence is that of Cytochrome c oxidase subunit 3 (COX3) from Pyricularia grisea (Crabgrass-specific blast fungus).